The following is a 179-amino-acid chain: Large ribosomal subunit protein bL17 (179 aa).

A compositionally biased stretch (basic and acidic residues) spans 123–161 (KEKDTKKKDDSKKSDDKKTSKKEAGFKSSKGESEHKKNT). Positions 123–179 (KEKDTKKKDDSKKSDDKKTSKKEAGFKSSKGESEHKKNTDQVVDSSSNRRYNRVKGS) are disordered. Residues 162 to 171 (DQVVDSSSNR) show a composition bias toward polar residues.

It belongs to the bacterial ribosomal protein bL17 family. In terms of assembly, part of the 50S ribosomal subunit. Contacts protein L32.

This is Large ribosomal subunit protein bL17 from Treponema denticola (strain ATCC 35405 / DSM 14222 / CIP 103919 / JCM 8153 / KCTC 15104).